Here is a 34-residue protein sequence, read N- to C-terminus: Photosystem II reaction center protein M (34 aa).

A helical membrane pass occupies residues 5-25; sequence ILAFIATALFILVPTAFLLII.

Belongs to the PsbM family. As to quaternary structure, PSII is composed of 1 copy each of membrane proteins PsbA, PsbB, PsbC, PsbD, PsbE, PsbF, PsbH, PsbI, PsbJ, PsbK, PsbL, PsbM, PsbT, PsbX, PsbY, PsbZ, Psb30/Ycf12, at least 3 peripheral proteins of the oxygen-evolving complex and a large number of cofactors. It forms dimeric complexes.

The protein resides in the plastid. It localises to the chloroplast thylakoid membrane. Functionally, one of the components of the core complex of photosystem II (PSII). PSII is a light-driven water:plastoquinone oxidoreductase that uses light energy to abstract electrons from H(2)O, generating O(2) and a proton gradient subsequently used for ATP formation. It consists of a core antenna complex that captures photons, and an electron transfer chain that converts photonic excitation into a charge separation. This subunit is found at the monomer-monomer interface. The sequence is that of Photosystem II reaction center protein M from Buxus microphylla (Littleleaf boxwood).